The sequence spans 116 residues: Large ribosomal subunit protein bL20 (116 aa).

It belongs to the bacterial ribosomal protein bL20 family.

Functionally, binds directly to 23S ribosomal RNA and is necessary for the in vitro assembly process of the 50S ribosomal subunit. It is not involved in the protein synthesizing functions of that subunit. The sequence is that of Large ribosomal subunit protein bL20 from Mycoplasmopsis pulmonis (strain UAB CTIP) (Mycoplasma pulmonis).